Here is a 256-residue protein sequence, read N- to C-terminus: Thiazole synthase (256 aa).

The active-site Schiff-base intermediate with DXP is Lys-98. Residues Gly-159, 185-186 (AG), and 207-208 (NT) contribute to the 1-deoxy-D-xylulose 5-phosphate site.

Belongs to the ThiG family. Homotetramer. Forms heterodimers with either ThiH or ThiS.

It localises to the cytoplasm. It carries out the reaction [ThiS sulfur-carrier protein]-C-terminal-Gly-aminoethanethioate + 2-iminoacetate + 1-deoxy-D-xylulose 5-phosphate = [ThiS sulfur-carrier protein]-C-terminal Gly-Gly + 2-[(2R,5Z)-2-carboxy-4-methylthiazol-5(2H)-ylidene]ethyl phosphate + 2 H2O + H(+). The protein operates within cofactor biosynthesis; thiamine diphosphate biosynthesis. Functionally, catalyzes the rearrangement of 1-deoxy-D-xylulose 5-phosphate (DXP) to produce the thiazole phosphate moiety of thiamine. Sulfur is provided by the thiocarboxylate moiety of the carrier protein ThiS. In vitro, sulfur can be provided by H(2)S. The protein is Thiazole synthase of Syntrophobacter fumaroxidans (strain DSM 10017 / MPOB).